The following is a 193-amino-acid chain: dTTP/UTP pyrophosphatase (193 aa).

The active-site Proton acceptor is the Asp70.

It belongs to the Maf family. YhdE subfamily. Requires a divalent metal cation as cofactor.

The protein resides in the cytoplasm. It catalyses the reaction dTTP + H2O = dTMP + diphosphate + H(+). The catalysed reaction is UTP + H2O = UMP + diphosphate + H(+). Functionally, nucleoside triphosphate pyrophosphatase that hydrolyzes dTTP and UTP. May have a dual role in cell division arrest and in preventing the incorporation of modified nucleotides into cellular nucleic acids. The sequence is that of dTTP/UTP pyrophosphatase from Alcanivorax borkumensis (strain ATCC 700651 / DSM 11573 / NCIMB 13689 / SK2).